We begin with the raw amino-acid sequence, 437 residues long: Protein farnesyltransferase subunit beta (437 aa).

5 PFTB repeats span residues 123–164 (ATDV…CIIG), 174–215 (REKL…SLTN), 222–263 (FEGT…VILK), 270–312 (LKSL…PLLH), and 332–374 (QQAL…SIAQ). (2E,6E)-farnesyl diphosphate contacts are provided by residues 248 to 251 (HGGY) and 291 to 294 (RCNK). Asp-297 and Cys-299 together coordinate Zn(2+). 300-303 (YSFW) provides a ligand contact to (2E,6E)-farnesyl diphosphate. His-362 contacts Zn(2+). Thr-436 carries the phosphothreonine modification.

It belongs to the protein prenyltransferase subunit beta family. Heterodimer of FNTA and FNTB. It depends on Zn(2+) as a cofactor.

The enzyme catalyses L-cysteinyl-[protein] + (2E,6E)-farnesyl diphosphate = S-(2E,6E)-farnesyl-L-cysteinyl-[protein] + diphosphate. In terms of biological role, essential subunit of the farnesyltransferase complex. Catalyzes the transfer of a farnesyl moiety from farnesyl diphosphate to a cysteine at the fourth position from the C-terminus of several proteins having the C-terminal sequence Cys-aliphatic-aliphatic-X. In Bos taurus (Bovine), this protein is Protein farnesyltransferase subunit beta (FNTB).